The following is a 178-amino-acid chain: Large ribosomal subunit protein uL6 (178 aa).

The protein belongs to the universal ribosomal protein uL6 family. Part of the 50S ribosomal subunit.

This protein binds to the 23S rRNA, and is important in its secondary structure. It is located near the subunit interface in the base of the L7/L12 stalk, and near the tRNA binding site of the peptidyltransferase center. In Helicobacter acinonychis (strain Sheeba), this protein is Large ribosomal subunit protein uL6.